The chain runs to 747 residues: Superkiller protein 7 (747 aa).

The tract at residues 14 to 51 (KSKGLLSADQSHSTSKSASLLERLHKNRETKDNNAETK) is disordered. Residues 21-31 (ADQSHSTSKSA) show a composition bias toward polar residues. Residues 35–51 (ERLHKNRETKDNNAETK) are compositionally biased toward basic and acidic residues. 2 positions are modified to phosphoserine: Ser-88 and Ser-90. Positions 89–117 (NSDLEKQGKSVTLDSKENELPTKRKSPDD) are disordered. The region spanning 265-503 (PLNLTCLFLG…YVPEWYEGPT (239 aa)) is the tr-type G domain. Residues 274–281 (GDTNAGKS) are G1. 274 to 281 (GDTNAGKS) provides a ligand contact to GTP. Residues 331-335 (GFSMF) are G2. A G3 region spans residues 356-359 (DTPG). Residues 356 to 360 (DTPGS) and 427 to 430 (NKAD) contribute to the GTP site. The G4 stretch occupies residues 427 to 430 (NKAD). Residues 467–469 (SGL) form a G5 region.

Belongs to the TRAFAC class translation factor GTPase superfamily. Classic translation factor GTPase family. In terms of assembly, interacts with the exosome and with the SKI complex composed of at least SKI2, SKI3 and SKI8. Interacts directly with SKI3 and SKI8.

The protein localises to the cytoplasm. Represses the expression of non-poly(A) mRNAs like L-A or M viruses and is therefore involved in antiviral system. Mediates interactions via its N-terminus between the exosome and the SKI complex which operate in the 3'-to-5' mRNA-decay pathway. By interacting with NAM7, is also required for nonsense-mediated 3'-to-5' mRNA-decay (NMD). May recognize a stalled 80S ribosome at the 3'-end of a nonstop mRNA which leads to the recruitment of the exosome and SKI complexes to the mRNAs to be degraded. In Saccharomyces cerevisiae (strain ATCC 204508 / S288c) (Baker's yeast), this protein is Superkiller protein 7 (SKI7).